A 243-amino-acid chain; its full sequence is Venom nerve growth factor 5 (243 aa).

The first 18 residues, 1 to 18 (MSMLCYTLIIAFLIGIWA), serve as a signal peptide directing secretion. A propeptide spanning residues 19-125 (APKSEDNVPL…TLNRNIRTKR (107 aa)) is cleaved from the precursor. Residues 47–66 (GLKTSRNTDQRHPAPKKAED) are compositionally biased toward basic and acidic residues. Residues 47–67 (GLKTSRNTDQRHPAPKKAEDQ) are disordered. 3 disulfides stabilise this stretch: Cys139-Cys204, Cys182-Cys232, and Cys192-Cys234. N-linked (GlcNAc...) asparagine glycosylation occurs at Asn148.

This sequence belongs to the NGF-beta family. In terms of assembly, homodimer; non-covalently linked. In terms of tissue distribution, expressed by the venom gland.

Its subcellular location is the secreted. In terms of biological role, nerve growth factor is important for the development and maintenance of the sympathetic and sensory nervous systems. It stimulates division and differentiation of sympathetic and embryonic sensory neurons as well as basal forebrain cholinergic neurons in the brain. Its relevance in the snake venom is not clear. However, it has been shown to inhibit metalloproteinase-dependent proteolysis of platelet glycoprotein Ib alpha, suggesting a metalloproteinase inhibition to prevent metalloprotease autodigestion and/or protection against prey proteases. Binds a lipid between the two protein chains in the homodimer. The lipid-bound form promotes histamine relase from mouse mast cells, contrary to the lipid-free form. This is Venom nerve growth factor 5 from Tropidechis carinatus (Australian rough-scaled snake).